We begin with the raw amino-acid sequence, 631 residues long: tRNA uridine 5-carboxymethylaminomethyl modification enzyme MnmG (631 aa).

Residue 13 to 18 (GGGHAG) coordinates FAD. 273-287 (GPRYCPSIEDKVNRF) is a binding site for NAD(+).

The protein belongs to the MnmG family. Homodimer. Heterotetramer of two MnmE and two MnmG subunits. The cofactor is FAD.

It localises to the cytoplasm. Functionally, NAD-binding protein involved in the addition of a carboxymethylaminomethyl (cmnm) group at the wobble position (U34) of certain tRNAs, forming tRNA-cmnm(5)s(2)U34. This chain is tRNA uridine 5-carboxymethylaminomethyl modification enzyme MnmG, found in Chromohalobacter salexigens (strain ATCC BAA-138 / DSM 3043 / CIP 106854 / NCIMB 13768 / 1H11).